The primary structure comprises 307 residues: Cytochrome c1 1, heme protein, mitochondrial (307 aa).

The N-terminal 64 residues, Met-1–Ala-64, are a transit peptide targeting the mitochondrion. The Mitochondrial intermembrane segment spans residues Asp-65–Met-270. Residues Ala-90–Ala-246 form the Cytochrome c domain. Heme c contacts are provided by Cys-103, Cys-106, His-107, and Met-226. A helical transmembrane segment spans residues Gly-271–Tyr-288. Topologically, residues Arg-289–Asn-307 are mitochondrial matrix.

Belongs to the cytochrome c family. As to quaternary structure, component of the ubiquinol-cytochrome c oxidoreductase (cytochrome b-c1 complex, complex III, CIII), a multisubunit enzyme composed of 10 subunits. The complex is composed of 3 respiratory subunits cytochrome b (MT-CYB), cytochrome c1 (CYC1-1 or CYC1-2) and Rieske protein (UCR1-1 or UCR1-2), 2 core protein subunits MPPalpha1 (or MPPalpha2) and MPPB, and 5 low-molecular weight protein subunits QCR7-1 (or QCR7-2), UCRQ-1 (or UCRQ-2), QCR9, UCRY and probably QCR6-1 (or QCR6-2). The complex exists as an obligatory dimer and forms supercomplexes (SCs) in the inner mitochondrial membrane with NADH-ubiquinone oxidoreductase (complex I, CI), resulting in different assemblies (supercomplexes SCI(1)III(2) and SCI(2)III(4)). Binds 1 heme c group covalently per subunit.

The protein resides in the mitochondrion inner membrane. Its function is as follows. Component of the ubiquinol-cytochrome c oxidoreductase, a multisubunit transmembrane complex that is part of the mitochondrial electron transport chain which drives oxidative phosphorylation. The respiratory chain contains 3 multisubunit complexes succinate dehydrogenase (complex II, CII), ubiquinol-cytochrome c oxidoreductase (cytochrome b-c1 complex, complex III, CIII) and cytochrome c oxidase (complex IV, CIV), that cooperate to transfer electrons derived from NADH and succinate to molecular oxygen, creating an electrochemical gradient over the inner membrane that drives transmembrane transport and the ATP synthase. The cytochrome b-c1 complex catalyzes electron transfer from ubiquinol to cytochrome c, linking this redox reaction to translocation of protons across the mitochondrial inner membrane, with protons being carried across the membrane as hydrogens on the quinol. In the process called Q cycle, 2 protons are consumed from the matrix, 4 protons are released into the intermembrane space and 2 electrons are passed to cytochrome c. Cytochrome c1 is a catalytic core subunit containing a c-type heme. It transfers electrons from the [2Fe-2S] iron-sulfur cluster of the Rieske protein to cytochrome c. This chain is Cytochrome c1 1, heme protein, mitochondrial (CYC1-1), found in Arabidopsis thaliana (Mouse-ear cress).